An 87-amino-acid chain; its full sequence is Toxin Cll5b (87 aa).

An N-terminal signal peptide occupies residues 1–19 (MNSLLMITACLAEIGTVWA). The region spanning 20–85 (KEGYLVNKST…TYPLPNKSCS (66 aa)) is the LCN-type CS-alpha/beta domain. 4 disulfide bridges follow: Cys31/Cys84, Cys35/Cys60, Cys44/Cys65, and Cys48/Cys67. Residues 86–87 (KK) constitute a propeptide, removed by a carboxypeptidase.

Belongs to the long (4 C-C) scorpion toxin superfamily. Sodium channel inhibitor family. Beta subfamily. As to expression, expressed by the venom gland.

It is found in the secreted. Functionally, beta toxins bind voltage-independently at site-4 of sodium channels (Nav) and shift the voltage of activation toward more negative potentials thereby affecting sodium channel activation and promoting spontaneous and repetitive firing. This chain is Toxin Cll5b, found in Centruroides limpidus (Mexican scorpion).